A 424-amino-acid polypeptide reads, in one-letter code: MNPDNTIAVITETIPIGMQFDKVYLTTFNMWREILSNTIKTLDISSFYWSLSDEVGTNFGTVILNEIVQLPKRGVRVRVAVNKSNKPLKDVERLQMAGVEVRYIDITNILGGVLHTKFWISDNTHIYLGSANMDWRSLTQVKELGIAIFNNRNLAADLTQIFEVYWYLGVNNLPYNWKNFYPSYYNTDHPLSINVSGVPHSVFIASAPQQLCTMERTNDLTALLSCIGNASKFVYVSVMNFIPIIYSKAGKILFWPYIEDELRRSAIDRQVSVKLLISCWQRSSFIMRNFLRSIAMLKSKNIDIEVKLFIVPDADPPIPYSRVNHAKYMVTDKTAYIGTSNWTGNYFTDICGASINITPDDGLGLRQQLEDIFIRDWNSKYSYELYDTSPTKRCRLLKNMKQCTNDIYCDEIQPEKELPEYSLE.

This sequence belongs to the orthopoxvirus OPG042 family.

Its subcellular location is the virion. DNA nicking enzyme that cleaves extruded cruciform DNA at its tip. Probably nicks viral hairpins. This is Virion nicking-joining enzyme (OPG042) from Cynomys gunnisoni (Gunnison's prairie dog).